Here is a 379-residue protein sequence, read N- to C-terminus: Cytochrome b (379 aa).

4 helical membrane-spanning segments follow: residues 33-53, 77-98, 113-133, and 178-198; these read FGSL…FLAM, WLIR…FIHV, WNIG…GYVL, and FFAF…VHLL. Heme b-binding residues include histidine 83 and histidine 97. Histidine 182 and histidine 196 together coordinate heme b. An a ubiquinone-binding site is contributed by histidine 201. 4 helical membrane passes run 226–246, 288–308, 320–340, and 347–367; these read IKDL…ALFF, LGGV…PLLN, VTQT…WIGG, and FTTI…ILIP.

This sequence belongs to the cytochrome b family. The cytochrome bc1 complex contains 11 subunits: 3 respiratory subunits (MT-CYB, CYC1 and UQCRFS1), 2 core proteins (UQCRC1 and UQCRC2) and 6 low-molecular weight proteins (UQCRH/QCR6, UQCRB/QCR7, UQCRQ/QCR8, UQCR10/QCR9, UQCR11/QCR10 and a cleavage product of UQCRFS1). This cytochrome bc1 complex then forms a dimer. It depends on heme b as a cofactor.

It is found in the mitochondrion inner membrane. In terms of biological role, component of the ubiquinol-cytochrome c reductase complex (complex III or cytochrome b-c1 complex) that is part of the mitochondrial respiratory chain. The b-c1 complex mediates electron transfer from ubiquinol to cytochrome c. Contributes to the generation of a proton gradient across the mitochondrial membrane that is then used for ATP synthesis. The polypeptide is Cytochrome b (MT-CYB) (Akodon lindberghi (Lindbergh's grass mouse)).